The primary structure comprises 494 residues: Gram-negative bacteria-binding protein 1 (494 aa).

The signal sequence occupies residues 1-19; sequence MPGLCIGILLLIGFGCTTA. Residues 20-120 enclose the CBM39 domain; the sequence is YKIPTPTVEL…QPLPVCNLGG (101 aa). N-linked (GlcNAc...) asparagine glycans are attached at residues N56 and N81. Residues 126-160 are disordered; the sequence is GCSPGDDDFTDDNQLSTEDSALEPTAPSVCEPSES. The GH16 domain occupies 135–494; it reads TDDNQLSTED…DYVRVFATDN (360 aa). An N-linked (GlcNAc...) asparagine glycan is attached at N185.

The protein belongs to the insect beta-1,3-glucan binding protein family.

The protein localises to the cell membrane. Plays a key role in innate immunity by acting as a pattern recognition receptor for beta-1,3-glucan from fungi and lipopolysaccharide from Gram-negative bacteria. Upon recognition of invading microorganism-derived products, acts upstream of protease spz processing enzyme SPE to activate the Toll pathway and to induce the expression of antimicrobial peptides drosomycin, cecropin and attacin. The protein is Gram-negative bacteria-binding protein 1 of Drosophila melanogaster (Fruit fly).